A 261-amino-acid polypeptide reads, in one-letter code: Serine/arginine-rich splicing factor 12 (261 aa).

In terms of domain architecture, RRM spans 10–88; the sequence is TSLFIRNVAD…RQIEIQFAQG (79 aa). A disordered region spans residues 86–261; that stretch reads AQGDRKTPGQ…SRSYRHKNSW (176 aa). Basic and acidic residues predominate over residues 88-109; that stretch reads GDRKTPGQMKSKERHPCSPSDH. Basic residues-rich tracts occupy residues 110 to 122 and 178 to 191; these read RRSR…RTRS and GRSR…RSKS. The span at 192-209 shows a compositional bias: low complexity; the sequence is IGKSQSSSPQKQTSSGTK. Positions 230–239 are enriched in polar residues; that stretch reads GYTNSETKVQ. Positions 240-261 are enriched in basic residues; sequence TAKHSHFRSHSRSRSYRHKNSW.

Belongs to the splicing factor SR family. As to expression, expressed in testis.

It is found in the nucleus. Functionally, splicing factor that seems to antagonize SR proteins in pre-mRNA splicing regulation. In Homo sapiens (Human), this protein is Serine/arginine-rich splicing factor 12 (SRSF12).